The primary structure comprises 266 residues: DNA-directed RNA polymerase subunit Rpo3 (266 aa).

Residues Cys-205, Cys-208, and Cys-211 each contribute to the [3Fe-4S] cluster site.

The protein belongs to the archaeal Rpo3/eukaryotic RPB3 RNA polymerase subunit family. In terms of assembly, part of the RNA polymerase complex. [3Fe-4S] cluster is required as a cofactor.

The protein resides in the cytoplasm. The enzyme catalyses RNA(n) + a ribonucleoside 5'-triphosphate = RNA(n+1) + diphosphate. Functionally, DNA-dependent RNA polymerase (RNAP) catalyzes the transcription of DNA into RNA using the four ribonucleoside triphosphates as substrates. This is DNA-directed RNA polymerase subunit Rpo3 from Methanosarcina acetivorans (strain ATCC 35395 / DSM 2834 / JCM 12185 / C2A).